A 366-amino-acid polypeptide reads, in one-letter code: Cyclin-O protein A (366 aa).

Disordered stretches follow at residues Ala18–Lys55 and Tyr80–Ser99.

Belongs to the cyclin family.

The protein localises to the cytoplasm. In terms of biological role, specifically required for generation of multiciliated cells, possibly by promoting a cell cycle state compatible with centriole amplification and maturation. Acts downstream of mcidas to promote mother centriole amplification and maturation in preparation for apical docking. This is Cyclin-O protein A (ccno-a) from Xenopus laevis (African clawed frog).